The primary structure comprises 154 residues: Peptide deformylase (154 aa).

Fe cation is bound by residues cysteine 90 and histidine 132. The active site involves glutamate 133. Residue histidine 136 participates in Fe cation binding.

It belongs to the polypeptide deformylase family. Fe(2+) is required as a cofactor.

The enzyme catalyses N-terminal N-formyl-L-methionyl-[peptide] + H2O = N-terminal L-methionyl-[peptide] + formate. Removes the formyl group from the N-terminal Met of newly synthesized proteins. Requires at least a dipeptide for an efficient rate of reaction. N-terminal L-methionine is a prerequisite for activity but the enzyme has broad specificity at other positions. The protein is Peptide deformylase of Desulforudis audaxviator (strain MP104C).